The primary structure comprises 273 residues: SPRY domain-containing SOCS box protein 1 (273 aa).

Tyr31 bears the Phosphotyrosine; by MET mark. In terms of domain architecture, B30.2/SPRY spans 33-231 (KPTRLDLLLD…IRMRYLNGLD (199 aa)). The SOCS box domain occupies 232–273 (PEPLPLMDLCRRSVRLALGRERLGEIHTLPLPASLKAYLLYQ).

Belongs to the SPSB family. In terms of assembly, component of the probable ECS(SPSB1) E3 ubiquitin-protein ligase complex which contains CUL5, RNF7/RBX2, Elongin BC complex and SPSB1. Interacts with CUL5, RNF7, ELOB and ELOC. Directly interacts with MET tyrosine kinase domain in the presence and in the absence of HGF, however HGF treatment has a positive effect on this interaction. When phosphorylated, interacts with RASA1 without affecting its stability. Interacts (via B30.2/SPRY domain) with PAWR; this interaction is direct and occurs in association with the Elongin BC complex. Interacts with NOS2. Interacts with EPHB2.

The protein resides in the cytoplasm. Its subcellular location is the cytosol. It participates in protein modification; protein ubiquitination. Its function is as follows. Substrate recognition component of a SCF-like ECS (Elongin BC-CUL2/5-SOCS-box protein) E3 ubiquitin-protein ligase complex which mediates the ubiquitination and subsequent proteasomal degradation of target proteins. Negatively regulates nitric oxide (NO) production and limits cellular toxicity in activated macrophages by mediating the ubiquitination and proteasomal degradation of NOS2. Acts as a bridge which links NOS2 with the ECS E3 ubiquitin ligase complex components ELOC and CUL5. The sequence is that of SPRY domain-containing SOCS box protein 1 (SPSB1) from Homo sapiens (Human).